The following is a 736-amino-acid chain: Zinc finger CCCH domain-containing protein 14 (736 aa).

Methionine 1 is subject to N-acetylmethionine. 2 stretches are compositionally biased toward polar residues: residues 77 to 103 and 131 to 145; these read TTEP…SNFS and VSTS…NVRQ. Positions 77-145 are disordered; it reads TTEPSSLKSS…QESKTTNVRQ (69 aa). Residue serine 85 is modified to Phosphoserine. Glycyl lysine isopeptide (Lys-Gly) (interchain with G-Cter in SUMO2) cross-links involve residues lysine 99, lysine 139, lysine 175, and lysine 198. Serine 240 is modified (phosphoserine). Lysine 245 participates in a covalent cross-link: Glycyl lysine isopeptide (Lys-Gly) (interchain with G-Cter in SUMO2). Serine 281 carries the phosphoserine modification. Residues lysine 283 and lysine 295 each participate in a glycyl lysine isopeptide (Lys-Gly) (interchain with G-Cter in SUMO2) cross-link. A disordered region spans residues 310–350; that stretch reads HDGEEEEEDDDYGSRTGSISSSVSVPAKPERRPSLPPSKQA. A phosphoserine mark is found at serine 327 and serine 343. An N6-acetyllysine; alternate modification is found at lysine 357. A Glycyl lysine isopeptide (Lys-Gly) (interchain with G-Cter in SUMO2); alternate cross-link involves residue lysine 357. Residue lysine 378 forms a Glycyl lysine isopeptide (Lys-Gly) (interchain with G-Cter in SUMO2) linkage. A phosphoserine mark is found at serine 390 and serine 409. A disordered region spans residues 398–430; the sequence is VVQGQSRTPRISPPIKEEETKGDSVEKNQGTQQ. Residues 412 to 423 are compositionally biased toward basic and acidic residues; that stretch reads IKEEETKGDSVE. Residue lysine 413 forms a Glycyl lysine isopeptide (Lys-Gly) (interchain with G-Cter in SUMO2) linkage. Position 421 is a phosphoserine (serine 421). Residue lysine 489 forms a Glycyl lysine isopeptide (Lys-Gly) (interchain with G-Cter in SUMO2) linkage. A phosphoserine mark is found at serine 498, serine 515, serine 527, and serine 620. 5 consecutive C3H1-type zinc fingers follow at residues 595 to 620, 621 to 640, 641 to 656, 682 to 699, and 701 to 719; these read EKLL…HPIS, PCKA…VHPN, CKYD…PFTH, CRYF…YHPK, and CRFN…HPTI.

The protein belongs to the ZC3H14 family. In terms of assembly, homodimer; facilitating circular RNAs (circRNAs) formation. Associates with the spliceosome. Interacts with HOOK2. Interacts with ZFC3H1 in a RNase-sensitive manner. Expressed in fetal and adult brain. Expressed in fetal and adult temporal lobe.

It localises to the nucleus speckle. Its subcellular location is the cytoplasm. Its function is as follows. RNA-binding protein involved in the biogenesis of circular RNAs (circRNAs), which are produced by back-splicing circularization of pre-mRNAs. Acts by binding to both exon-intron boundary and 3'-UTR of pre-mRNAs to promote circRNA biogenesis through dimerization and the association with the spliceosome. Required for spermatogenesis via involvement in circRNA biogenesis. Regulates the pre-mRNA processing of ATP5MC1; preventing its degradation. Also binds the poly(A) tail of mRNAs; controlling poly(A) length in neuronal cells. The sequence is that of Zinc finger CCCH domain-containing protein 14 from Homo sapiens (Human).